Consider the following 121-residue polypeptide: Large ribosomal subunit protein bL12 (121 aa).

This sequence belongs to the bacterial ribosomal protein bL12 family. As to quaternary structure, homodimer. Part of the ribosomal stalk of the 50S ribosomal subunit. Forms a multimeric L10(L12)X complex, where L10 forms an elongated spine to which 2 to 4 L12 dimers bind in a sequential fashion. Binds GTP-bound translation factors.

Forms part of the ribosomal stalk which helps the ribosome interact with GTP-bound translation factors. Is thus essential for accurate translation. The polypeptide is Large ribosomal subunit protein bL12 (Vibrio atlanticus (strain LGP32) (Vibrio splendidus (strain Mel32))).